We begin with the raw amino-acid sequence, 990 residues long: DNA ligase 4 (990 aa).

Residues 57–84 (TQKKGRQPPGPRRKAGPHGHSNLSPHEA) are disordered. Residues Glu-324, Lys-326, Leu-327, Arg-331, Glu-394, Phe-436, Glu-496, Lys-501, Lys-518, and Lys-520 each contribute to the ATP site. Catalysis depends on Lys-326, which acts as the N6-AMP-lysine intermediate. Mg(2+) is bound at residue Glu-394. Glu-496 is a binding site for Mg(2+). BRCT domains lie at 728–821 (PQSK…LPYL) and 900–989 (YMFS…RYQW).

This sequence belongs to the ATP-dependent DNA ligase family. It depends on Mg(2+) as a cofactor.

The protein resides in the nucleus. It catalyses the reaction ATP + (deoxyribonucleotide)n-3'-hydroxyl + 5'-phospho-(deoxyribonucleotide)m = (deoxyribonucleotide)n+m + AMP + diphosphate.. DNA ligase involved in DNA non-homologous end joining (NHEJ); required for double-strand break (DSB) repair. This Phaeosphaeria nodorum (strain SN15 / ATCC MYA-4574 / FGSC 10173) (Glume blotch fungus) protein is DNA ligase 4 (LIG4).